The sequence spans 127 residues: MFAHKLNVSVISPEKILYKGEVDSLVVPGSEGFFGILPNHAPLVATLGIGVLEIRKGEKLKNISVEGGFIEVKDNTVSILTDHGALKEDIDIEAEKKALAEVEKLSPSDSKNLLLQKTKTRILVASR.

Belongs to the ATPase epsilon chain family. F-type ATPases have 2 components, CF(1) - the catalytic core - and CF(0) - the membrane proton channel. CF(1) has five subunits: alpha(3), beta(3), gamma(1), delta(1), epsilon(1). CF(0) has three main subunits: a, b and c.

Its subcellular location is the cell inner membrane. Functionally, produces ATP from ADP in the presence of a proton gradient across the membrane. This chain is ATP synthase epsilon chain, found in Leptospira borgpetersenii serovar Hardjo-bovis (strain JB197).